Consider the following 2130-residue polypeptide: Highly reducing polyketide synthase anuA (2130 aa).

A Ketosynthase family 3 (KS3) domain is found at methionine 1 to glutamine 213. Residues phenylalanine 317–glycine 644 form the Malonyl-CoA:ACP transacylase (MAT) domain. The tract at residues histidine 701–alanine 836 is N-terminal hotdog fold. The PKS/mFAS DH domain occupies histidine 701–alanine 1000. Histidine 733 functions as the Proton acceptor; for dehydratase activity in the catalytic mechanism. The interval leucine 849–alanine 1000 is C-terminal hotdog fold. Aspartate 914 acts as the Proton donor; for dehydratase activity in catalysis. The region spanning glycine 1405–isoleucine 1722 is the Enoyl reductase (ER) domain. Residues serine 1747–serine 1927 enclose the Ketoreductase (KR) domain. The region spanning threonine 2047–leucine 2125 is the Carrier domain. Serine 2084 bears the O-(pantetheine 4'-phosphoryl)serine mark.

Requires pantetheine 4'-phosphate as cofactor.

The protein operates within secondary metabolite biosynthesis. Functionally, highly reducing polyketide synthase; part of the gene cluster that mediates the biosynthesis of annullatin D, an alkylated aromatic polyketide with a fused dihydrobenzofuran lactone ring system that exhibits potent agonistic activities toward the cannabinoid receptors. The annullatin backbone 2-hydroxymethyl-3-pentylphenol is assembled from one acetyl-CoA starter unit and 5 malonyl-CoA elongation units by cooperation of the highly reducing polyketide synthase anuA, the short-chain dehydrogenase anuB and the oxidoreductase anuC, before being hydroxylated at the C-5 alkyl chain by the cytochrome P450 monooxygenase anuE to form (8S)-annullatin E. The prenyltransferase anuH subsequently installs one isoprenyl group at the benzene ring to form (8S)-annullatin J. Enzymatic or nonenzymatic dihydro-benzofuran ring formation between the prenyl and the phenolic hydroxyl groups in (8S)-annullatin J results in two diastereomers (2S,9S)-annullatin H and compound 12. The intermediate (2S,9S)-annullatin H is then converted to (2S,9S)-annullatin D by the FAD-linked oxidoreductase anuG-catalyzed five-member lactone ring formation. The isomer 12 acts as a substrate for the short-chain dehydrogenase anuF and is oxidized to (2R)-annullatin F, which is subsequently acetylated by an acetyltransferase leading to (2R)-annullatin G formation. The remaining enzymes identified within the cluster, anuD, anuI and anuJ, seem not to be involved in annullatin biosynthesis. The sequence is that of Highly reducing polyketide synthase anuA from Penicillium roqueforti (strain FM164).